The sequence spans 100 residues: Competence protein ComGE (100 aa).

A helical transmembrane segment spans residues V15–L35.

As to quaternary structure, the transformation pili are flexible filaments, consisting mainly of the major pilin ComGC and smaller amounts of the minor pilins, including at least ComGD, ComGF and ComGG, and perhaps ComGE. Interacts with ComGD. Interacts with ComGF. Interacts with ComGG.

Its subcellular location is the cell membrane. The protein resides in the cell surface. Functionally, required for formation of the type IV-like pilus (T4P) that plays a role in transformation. Transformation pili are dynamically extended and retracted, perhaps thereby promoting DNA uptake and transformation. Involved in transformation. Required for DNA binding. The chain is Competence protein ComGE from Streptococcus pneumoniae (strain ATCC BAA-255 / R6).